The following is a 168-amino-acid chain: NADH dehydrogenase [ubiquinone] 1 alpha subcomplex assembly factor 2 (168 aa).

Over residues 108 to 118 the composition is skewed to basic and acidic residues; that stretch reads KEKLLQEESNK. The segment at 108-168 is disordered; the sequence is KEKLLQEESN…MPHGDKGHSQ (61 aa). S133 is subject to Phosphoserine. The span at 144 to 155 shows a compositional bias: polar residues; the sequence is ESPTSTGKTFQP.

This sequence belongs to the complex I NDUFA12 subunit family. Interacts with ARMC9.

The protein resides in the mitochondrion. Functionally, acts as a molecular chaperone for mitochondrial complex I assembly. Complex I functions in the transfer of electrons from NADH to the respiratory chain. The immediate electron acceptor for the enzyme is believed to be ubiquinone. Is involved in the initial steps of cilia formation, including removal of CP110 from the mother centrioles, docking of membrane vesicles to the mother centrioles, and establishment of the transition zone. This Bos taurus (Bovine) protein is NADH dehydrogenase [ubiquinone] 1 alpha subcomplex assembly factor 2 (NDUFAF2).